The primary structure comprises 732 residues: MSKMRVYEYAKKNNVPSKDVIHKLKEMNIEVTNHMATLEPEVVEKLDHTYNKKNERPQASAPKEKQKAPVKPKNYVDDFDDEDEEVVKTKVPKKKSANKKKEGKKHDLQLQQQEKKIFHQQKKKIKGKAKAKEQQPVQQEQPMKKEKELPKKITFEGTLTVAELAKKLGREPSEIIKKLFMLGVMATINQELDKDAIELICSDYGVEVEEKVVIDETNFESIEIVDDPEDLVERPPVVTIMGHVDHGKTTLLDSIRHSKVTEQEAGGITQHIGAYQVTVNDKKITFLDTPGHEAFTTMRARGAQVTDIVVLVVAADDGVMPQTVEAINHAKAANVPIIVAINKMDKPDANPDRVMQELMEYNLIPEEWGGDTIFCKLSAKTGEGIDNLLEMILLVSEMEELKANPNRRATGTVIEAKLDKGRGPVATLLVQAGTLHVGDPIVVGCTYGRVRAMVNDTGRRVKEAGPSTPVEITGLHEVPQAGDRFMVFEDEKKARQIGEARAQKQLMEQRNMKARVSLDDLFEQIKQGEMKELNIIVKADVQGSVEALVAALQKIEVEGVRVKIIHAAVGAITESDILLATTSNAIVIGFNVRPDANAKRVAESEKVDIRLHRIIYKVIEEIEAAMKGMLDPEYEEKVIGQAEVRQTFKVSKVGTIAGCYVTDGKITRDSKVRLIRQGIVVYEGEIDSLKRFKDDVKEVMQGYECGLTIKNFNDIKEGDVIEAYIMQEVERK.

Residues 40–147 (PEVVEKLDHT…QQEQPMKKEK (108 aa)) form a disordered region. The segment covering 42–67 (VVEKLDHTYNKKNERPQASAPKEKQK) has biased composition (basic and acidic residues). Residues 90–103 (KVPKKKSANKKKEG) are compositionally biased toward basic residues. Residues 104-117 (KKHDLQLQQQEKKI) are compositionally biased toward basic and acidic residues. Basic residues predominate over residues 118-129 (FHQQKKKIKGKA). A tr-type G domain is found at 233 to 402 (ERPPVVTIMG…LLVSEMEELK (170 aa)). The tract at residues 242-249 (GHVDHGKT) is G1. 242 to 249 (GHVDHGKT) provides a ligand contact to GTP. The G2 stretch occupies residues 267 to 271 (GITQH). The tract at residues 288–291 (DTPG) is G3. Residues 288 to 292 (DTPGH) and 342 to 345 (NKMD) contribute to the GTP site. A G4 region spans residues 342–345 (NKMD). A G5 region spans residues 378–380 (SAK).

The protein belongs to the TRAFAC class translation factor GTPase superfamily. Classic translation factor GTPase family. IF-2 subfamily.

The protein resides in the cytoplasm. In terms of biological role, one of the essential components for the initiation of protein synthesis. Protects formylmethionyl-tRNA from spontaneous hydrolysis and promotes its binding to the 30S ribosomal subunits. Also involved in the hydrolysis of GTP during the formation of the 70S ribosomal complex. This chain is Translation initiation factor IF-2, found in Geobacillus sp. (strain WCH70).